The primary structure comprises 159 residues: SsrA-binding protein (159 aa).

The protein belongs to the SmpB family.

Its subcellular location is the cytoplasm. Required for rescue of stalled ribosomes mediated by trans-translation. Binds to transfer-messenger RNA (tmRNA), required for stable association of tmRNA with ribosomes. tmRNA and SmpB together mimic tRNA shape, replacing the anticodon stem-loop with SmpB. tmRNA is encoded by the ssrA gene; the 2 termini fold to resemble tRNA(Ala) and it encodes a 'tag peptide', a short internal open reading frame. During trans-translation Ala-aminoacylated tmRNA acts like a tRNA, entering the A-site of stalled ribosomes, displacing the stalled mRNA. The ribosome then switches to translate the ORF on the tmRNA; the nascent peptide is terminated with the 'tag peptide' encoded by the tmRNA and targeted for degradation. The ribosome is freed to recommence translation, which seems to be the essential function of trans-translation. The protein is SsrA-binding protein of Acidiphilium cryptum (strain JF-5).